We begin with the raw amino-acid sequence, 59 residues long: Large ribosomal subunit protein bL32 (59 aa).

It belongs to the bacterial ribosomal protein bL32 family.

This Desulfitobacterium hafniense (strain Y51) protein is Large ribosomal subunit protein bL32.